A 151-amino-acid chain; its full sequence is Large ribosomal subunit protein bL9 (151 aa).

This sequence belongs to the bacterial ribosomal protein bL9 family.

Its function is as follows. Binds to the 23S rRNA. In Desulforapulum autotrophicum (strain ATCC 43914 / DSM 3382 / VKM B-1955 / HRM2) (Desulfobacterium autotrophicum), this protein is Large ribosomal subunit protein bL9.